The chain runs to 224 residues: UPF0758 protein Tola_0183 (224 aa).

One can recognise an MPN domain in the interval 102–224; the sequence is SLTSPQLVRR…PVSFAERGWL (123 aa). Zn(2+)-binding residues include H173, H175, and D186. The short motif at 173–186 is the JAMM motif element; it reads HNHPSGVAEPSHAD.

Belongs to the UPF0758 family.

This chain is UPF0758 protein Tola_0183, found in Tolumonas auensis (strain DSM 9187 / NBRC 110442 / TA 4).